Reading from the N-terminus, the 326-residue chain is HTH-type transcriptional regulator SyrM (326 aa).

The region spanning 32–89 (IDLNLLVDLEALLQYRHITQAAQHVGRSQPAMSRALSRLRGMLKDDLLVAGSRGLVLT) is the HTH lysR-type domain. Positions 49 to 68 (ITQAAQHVGRSQPAMSRALS) form a DNA-binding region, H-T-H motif.

It belongs to the LysR transcriptional regulatory family.

Acts in trans to stimulate nod gene expression via nodD3 and exo gene expression via SyrA. The polypeptide is HTH-type transcriptional regulator SyrM (syrM) (Rhizobium meliloti (strain 1021) (Ensifer meliloti)).